We begin with the raw amino-acid sequence, 420 residues long: UDP-N-acetyl-D-mannosamine dehydrogenase (420 aa).

Positions 13, 14, 33, 85, and 126 each coordinate NAD(+). 8 residues coordinate UDP-N-acetyl-alpha-D-mannosaminouronate: Arg160, Val161, Lys212, Asn216, Arg219, His250, Arg252, and Gly263. Lys212 acts as the Proton donor/acceptor in catalysis. Cys266 functions as the Nucleophile in the catalytic mechanism. Positions 330 and 331 each coordinate UDP-N-acetyl-alpha-D-mannosaminouronate. Arg338 contacts NAD(+). Lys416 is a binding site for UDP-N-acetyl-alpha-D-mannosaminouronate.

It belongs to the UDP-glucose/GDP-mannose dehydrogenase family. WecC subfamily. As to quaternary structure, homodimer.

The catalysed reaction is UDP-N-acetyl-alpha-D-mannosamine + 2 NAD(+) + H2O = UDP-N-acetyl-alpha-D-mannosaminouronate + 2 NADH + 3 H(+). Its pathway is bacterial outer membrane biogenesis; enterobacterial common antigen biosynthesis. Functionally, catalyzes the four-electron oxidation of UDP-N-acetyl-D-mannosamine (UDP-ManNAc), reducing NAD(+) and releasing UDP-N-acetylmannosaminuronic acid (UDP-ManNAcA). This chain is UDP-N-acetyl-D-mannosamine dehydrogenase, found in Salmonella typhimurium (strain LT2 / SGSC1412 / ATCC 700720).